We begin with the raw amino-acid sequence, 359 residues long: NF-kappa-B inhibitor beta (359 aa).

2 positions are modified to phosphoserine; by RPS6KA1: Ser-19 and Ser-23. ANK repeat units lie at residues 57–86 (DGDTALHLAVIHQHEPFLDFLLGFSAGTEY), 93–122 (LGQTALHLAAILGEASTVEKLYAAGAGVLV), 126–155 (GGHTALHLACRVRAHTCAYVLLQPRPSHPR), 206–235 (DGHTPLHVAVIHKDAEMVQLLRDAGADLNK), 240–269 (CGRTPLHLAVEGQAAGVLALLLKAGADPTA), and 273–302 (GGRTPLGSALLRPNPVLARLLRAHGAPEPE). Residues 153 to 192 (HPRDASDTYLTQSQDHTPDTSHAPVATDPQPNPGNEEELR) are disordered. Basic and acidic residues predominate over residues 298-308 (APEPEDKDDKL). A disordered region spans residues 298-359 (APEPEDKDDK…KPLPDDPNPA (62 aa)). Ser-318 carries the phosphoserine modification. A compositionally biased stretch (acidic residues) spans 318–331 (SDSDNRDEGDEYDD). Residues 342-359 (QPPPSPAAKPLPDDPNPA) are compositionally biased toward pro residues.

The protein belongs to the NF-kappa-B inhibitor family. Interacts with THRB (via ligand-binding domain). Interacts with RELA and REL. Interacts with COMMD1. Interacts with inhibitor kappa B-interacting Ras-like NKIRAS1 and NKIRAS2. Post-translationally, phosphorylated by RPS6KA1; followed by degradation. Interaction with NKIRAS1 and NKIRAS2 probably prevents phosphorylation.

It is found in the cytoplasm. The protein localises to the nucleus. Functionally, inhibits NF-kappa-B by complexing with and trapping it in the cytoplasm. However, the unphosphorylated form resynthesized after cell stimulation is able to bind NF-kappa-B allowing its transport to the nucleus and protecting it to further NFKBIA-dependent inactivation. Association with inhibitor kappa B-interacting NKIRAS1 and NKIRAS2 prevent its phosphorylation rendering it more resistant to degradation, explaining its slower degradation. This is NF-kappa-B inhibitor beta (Nfkbib) from Rattus norvegicus (Rat).